Here is a 309-residue protein sequence, read N- to C-terminus: Type II methyltransferase M.HgiDI (309 aa).

An SAM-dependent MTase C5-type domain is found at 1-297; it reads MKTIDLFAGC…TSLQAYLNQP (297 aa). The active site involves Cys-75.

Belongs to the class I-like SAM-binding methyltransferase superfamily. C5-methyltransferase family.

The enzyme catalyses a 2'-deoxycytidine in DNA + S-adenosyl-L-methionine = a 5-methyl-2'-deoxycytidine in DNA + S-adenosyl-L-homocysteine + H(+). Functionally, a methylase that recognizes the double-stranded sequence 5'-GRCGYC-3', methylates C-? on both strands, and protects the DNA from cleavage by the HgiDI endonuclease. The chain is Type II methyltransferase M.HgiDI from Herpetosiphon aurantiacus (Herpetosiphon giganteus).